Consider the following 659-residue polypeptide: Ion-translocating oxidoreductase complex subunit C (659 aa).

4Fe-4S ferredoxin-type domains are found at residues 366-397 and 407-436; these read TEMG…QQLY and KARN…VQYY. [4Fe-4S] cluster is bound by residues Cys377, Cys380, Cys383, Cys387, Cys416, Cys419, Cys422, and Cys426.

The protein belongs to the 4Fe4S bacterial-type ferredoxin family. RnfC subfamily. As to quaternary structure, the complex is composed of six subunits: RnfA, RnfB, RnfC, RnfD, RnfE and RnfG. [4Fe-4S] cluster serves as cofactor.

It is found in the cell inner membrane. Its function is as follows. Part of a membrane-bound complex that couples electron transfer with translocation of ions across the membrane. This chain is Ion-translocating oxidoreductase complex subunit C, found in Yersinia pseudotuberculosis serotype IB (strain PB1/+).